The sequence spans 439 residues: GTPase Der (439 aa).

2 EngA-type G domains span residues 4-168 (PIVA…KDDE) and 177-352 (INIA…DNYT). GTP is bound by residues 10-17 (GRPNVGKS), 57-61 (DTGGI), 120-123 (NKID), 183-190 (GKPNVGKS), 230-234 (DTAGL), and 295-298 (NKWD). One can recognise a KH-like domain in the interval 353 to 437 (KRVKTGVLND…GIKLEFRERK (85 aa)).

The protein belongs to the TRAFAC class TrmE-Era-EngA-EngB-Septin-like GTPase superfamily. EngA (Der) GTPase family. Associates with the 50S ribosomal subunit.

In terms of biological role, GTPase that plays an essential role in the late steps of ribosome biogenesis. The protein is GTPase Der of Clostridium botulinum (strain Kyoto / Type A2).